A 181-amino-acid polypeptide reads, in one-letter code: Ribosome maturation factor RimP (181 aa).

Belongs to the RimP family.

The protein localises to the cytoplasm. In terms of biological role, required for maturation of 30S ribosomal subunits. The protein is Ribosome maturation factor RimP of Sphingopyxis alaskensis (strain DSM 13593 / LMG 18877 / RB2256) (Sphingomonas alaskensis).